A 388-amino-acid chain; its full sequence is Dipeptidase verJ (388 aa).

Residues histidine 29, aspartate 31, and glutamate 142 each contribute to the Zn(2+) site. Residues histidine 169, arginine 243, and aspartate 300 each coordinate substrate.

Belongs to the metallo-dependent hydrolases superfamily. Peptidase M19 family. Zn(2+) serves as cofactor.

The catalysed reaction is an L-aminoacyl-L-amino acid + H2O = 2 an L-alpha-amino acid. It participates in mycotoxin biosynthesis. Dipeptidase; part of the gene cluster that mediates the biosynthesis of 11'-deoxyverticillin A, one of the dimeric epipolythiodioxopiperazines (ETPs) from the verticillin family that act as mycotoxins. 11'-deoxyverticillin A is required for normal conidiation. The nonribosomal peptide synthetase verP is speculated to be responsible for condensation of amino acids to form the carbon skeleton of verticillin, whereas the cluster-specific tailoring enzymes are involved in further modifications leading to the production of 11'-deoxyverticillin A. The chain is Dipeptidase verJ from Clonostachys rogersoniana.